Here is a 225-residue protein sequence, read N- to C-terminus: MSPRLRLQPEAVGIGMTSQRVRDRLVDRLREAGIVDESTLNAIRVVPRHLFIDEALASRAYEDTALPIGHGQTISQPWVVARMTEAVLQVSPKKVLEVGTGSGYQAAVLGALGLEIYTVERIGDLLRQARKRFRALGMNIRTKHDDGRAGWAEHGPFDAIVVTAAAPALVDELVGQLAEGGRLVAPVGGPGGQSLVQLDRRADGSIEQRVLAPVTFVPLLSGMLD.

S75 is a catalytic residue.

It belongs to the methyltransferase superfamily. L-isoaspartyl/D-aspartyl protein methyltransferase family.

It localises to the cytoplasm. It carries out the reaction [protein]-L-isoaspartate + S-adenosyl-L-methionine = [protein]-L-isoaspartate alpha-methyl ester + S-adenosyl-L-homocysteine. Functionally, catalyzes the methyl esterification of L-isoaspartyl residues in peptides and proteins that result from spontaneous decomposition of normal L-aspartyl and L-asparaginyl residues. It plays a role in the repair and/or degradation of damaged proteins. This is Protein-L-isoaspartate O-methyltransferase from Stenotrophomonas maltophilia (strain K279a).